A 186-amino-acid chain; its full sequence is Ribosome-recycling factor (186 aa).

Belongs to the RRF family.

Its subcellular location is the cytoplasm. Its function is as follows. Responsible for the release of ribosomes from messenger RNA at the termination of protein biosynthesis. May increase the efficiency of translation by recycling ribosomes from one round of translation to another. This is Ribosome-recycling factor from Chlorobium luteolum (strain DSM 273 / BCRC 81028 / 2530) (Pelodictyon luteolum).